The primary structure comprises 103 residues: AQADATANEVAERIGYITRVQSFCASHRLHSPTLVMNITNIKEHIEEVIPLDHKNLDKDVPYFANVNVAVYIXDNMVKQLPANLLYEVKIHETDKNIVVYRGE.

The residue at position 1 (alanine 1) is an N-acetylalanine. Residue histidine 27 participates in Zn(2+) binding. Active-site charge relay system residues include histidine 53 and glutamate 92.

This sequence belongs to the PTPS family. Homohexamer formed of two homotrimers in a head to head fashion. Zn(2+) is required as a cofactor.

The enzyme catalyses 7,8-dihydroneopterin 3'-triphosphate = 6-pyruvoyl-5,6,7,8-tetrahydropterin + triphosphate + H(+). It functions in the pathway cofactor biosynthesis; tetrahydrobiopterin biosynthesis; tetrahydrobiopterin from 7,8-dihydroneopterin triphosphate: step 1/3. Functionally, involved in the biosynthesis of tetrahydrobiopterin, an essential cofactor of aromatic amino acid hydroxylases. Catalyzes the transformation of 7,8-dihydroneopterin triphosphate into 6-pyruvoyl tetrahydropterin. The protein is 6-pyruvoyl tetrahydrobiopterin synthase (pts) of Salmo salar (Atlantic salmon).